A 273-amino-acid chain; its full sequence is Dermonecrotic toxin LapSicTox-alphaIB1bi (273 aa).

Residue His5 is part of the active site. Positions 25 and 27 each coordinate Mg(2+). His41 (nucleophile) is an active-site residue. Intrachain disulfides connect Cys45/Cys51 and Cys47/Cys190. Asp85 is a binding site for Mg(2+). N-linked (GlcNAc...) asparagine glycosylation is found at Asn189 and Asn250.

Belongs to the arthropod phospholipase D family. Class II subfamily. Mg(2+) is required as a cofactor. In terms of tissue distribution, expressed by the venom gland.

Its subcellular location is the secreted. It carries out the reaction an N-(acyl)-sphingosylphosphocholine = an N-(acyl)-sphingosyl-1,3-cyclic phosphate + choline. The enzyme catalyses an N-(acyl)-sphingosylphosphoethanolamine = an N-(acyl)-sphingosyl-1,3-cyclic phosphate + ethanolamine. The catalysed reaction is a 1-acyl-sn-glycero-3-phosphocholine = a 1-acyl-sn-glycero-2,3-cyclic phosphate + choline. It catalyses the reaction a 1-acyl-sn-glycero-3-phosphoethanolamine = a 1-acyl-sn-glycero-2,3-cyclic phosphate + ethanolamine. Dermonecrotic toxins cleave the phosphodiester linkage between the phosphate and headgroup of certain phospholipids (sphingolipid and lysolipid substrates), forming an alcohol (often choline) and a cyclic phosphate. This toxin acts on sphingomyelin (SM). It may also act on ceramide phosphoethanolamine (CPE), lysophosphatidylcholine (LPC) and lysophosphatidylethanolamine (LPE), but not on lysophosphatidylserine (LPS), and lysophosphatidylglycerol (LPG). It acts by transphosphatidylation, releasing exclusively cyclic phosphate products as second products. Induces dermonecrosis, hemolysis, increased vascular permeability, edema, inflammatory response, and platelet aggregation. The chain is Dermonecrotic toxin LapSicTox-alphaIB1bi from Loxosceles apachea (Apache recluse spider).